The chain runs to 124 residues: Phosphoribosyl-AMP cyclohydrolase (124 aa).

Residue Asp-82 coordinates Mg(2+). Position 83 (Cys-83) interacts with Zn(2+). Mg(2+) contacts are provided by Asp-84 and Asp-86. Cys-99 and Cys-106 together coordinate Zn(2+).

It belongs to the PRA-CH family. As to quaternary structure, homodimer. Requires Mg(2+) as cofactor. The cofactor is Zn(2+).

It is found in the cytoplasm. It catalyses the reaction 1-(5-phospho-beta-D-ribosyl)-5'-AMP + H2O = 1-(5-phospho-beta-D-ribosyl)-5-[(5-phospho-beta-D-ribosylamino)methylideneamino]imidazole-4-carboxamide. The protein operates within amino-acid biosynthesis; L-histidine biosynthesis; L-histidine from 5-phospho-alpha-D-ribose 1-diphosphate: step 3/9. Its function is as follows. Catalyzes the hydrolysis of the adenine ring of phosphoribosyl-AMP. The polypeptide is Phosphoribosyl-AMP cyclohydrolase (Rhizorhabdus wittichii (strain DSM 6014 / CCUG 31198 / JCM 15750 / NBRC 105917 / EY 4224 / RW1) (Sphingomonas wittichii)).